A 398-amino-acid polypeptide reads, in one-letter code: Phosphoglycerate kinase (398 aa).

Residues D21–N23, R36, H59–R62, R119, and R157 each bind substrate. Residues K208, G296, E327, and G354 to S357 each bind ATP.

The protein belongs to the phosphoglycerate kinase family. Monomer.

It is found in the cytoplasm. The enzyme catalyses (2R)-3-phosphoglycerate + ATP = (2R)-3-phospho-glyceroyl phosphate + ADP. Its pathway is carbohydrate degradation; glycolysis; pyruvate from D-glyceraldehyde 3-phosphate: step 2/5. The polypeptide is Phosphoglycerate kinase (Streptococcus pneumoniae (strain Taiwan19F-14)).